Consider the following 155-residue polypeptide: 3-hydroxyacyl-[acyl-carrier-protein] dehydratase FabZ (155 aa).

H54 is an active-site residue.

This sequence belongs to the thioester dehydratase family. FabZ subfamily.

It is found in the cytoplasm. It carries out the reaction a (3R)-hydroxyacyl-[ACP] = a (2E)-enoyl-[ACP] + H2O. In terms of biological role, involved in unsaturated fatty acids biosynthesis. Catalyzes the dehydration of short chain beta-hydroxyacyl-ACPs and long chain saturated and unsaturated beta-hydroxyacyl-ACPs. The sequence is that of 3-hydroxyacyl-[acyl-carrier-protein] dehydratase FabZ from Burkholderia lata (strain ATCC 17760 / DSM 23089 / LMG 22485 / NCIMB 9086 / R18194 / 383).